A 472-amino-acid chain; its full sequence is E1B 55 kDa protein (472 aa).

The tract at residues 1-90 is disordered; the sequence is MERPNPSVGG…GQRGEKRKLE (90 aa). Over residues 32–44 the composition is skewed to low complexity; the sequence is RLLAGAASARSGS. Over residues 45 to 57 the composition is skewed to gly residues; sequence SAGGGGGGGGGGE. Phosphoserine is present on residues Ser-468 and Ser-469.

Belongs to the adenoviridae E1B 55 kDa protein family. As to quaternary structure, interacts with host PML-4 and PML-5; this interaction promotes efficient subnuclear targeting of E1B-55K to PML nuclear bodies. Interacts with E4-ORF3 protein. Interacts with E4-ORF6 protein.

It is found in the host nucleus. The protein localises to the host cytoplasm. Functionally, plays a major role to prevent cellular inhibition of viral genome replication. Assembles an SCF-like E3 ubiquitin ligase complex based on the cellular proteins ELOB, ELOC, CUL5 and RBX1, in cooperation with viral E4orf6. This viral RING-type ligase ubiquitinates cellular substrates and targets them to proteasomal degradation: TP53/p53, LIG4, MRE11-RAD50-NBS1 (MRN) complex, ITGA3, DAXX and BLM. E1B-55K probably acts as the substrate-specific adapter of the SCF-like E3 ubiquitin ligase complex. Degradation of host TP53/p53 activity is essential for preventing E1A-induced TP53 accumulation that would otherwise lead to cell apoptosis and growth arrest. E1B-55K also inactivates TP53 transcription-factor activity by binding its transactivation domain. E1B-55K also functions as a SUMO1 E3 ligase for TP53 which causes the latter to be sequestered in promyelocytic leukemia (PML) nuclear bodies thereby contributing to maximal inhibition of TP53 function. This is E1B 55 kDa protein from Homo sapiens (Human).